Here is a 150-residue protein sequence, read N- to C-terminus: uncharacterized protein (150 aa).

4 helical membrane passes run 32 to 52, 64 to 84, 94 to 114, and 123 to 143; these read ILYG…AVSL, FNWL…FISG, IGAL…YLGF, and LIFH…GVNM.

The protein resides in the cell membrane. This is an uncharacterized protein from Bacillus subtilis (strain 168).